Consider the following 118-residue polypeptide: M-zodatoxin-Lt8p (118 aa).

Residues 1–3 (AES) form the signal peptide. The propeptide occupies 4-43 (KPAESEHELAEVEEENELADLEDAVWLEHLADLSDLEEAR).

The protein belongs to the cationic peptide 06 (cytoinsectotoxin) family. As to expression, expressed by the venom gland.

The protein resides in the secreted. Its function is as follows. Insecticidal, cytolytic and antimicrobial peptide. Forms voltage-dependent, ion-permeable channels in membranes. At high concentration causes cell membrane lysis. In Lachesana tarabaevi (Spider), this protein is M-zodatoxin-Lt8p (cit 1-15).